Consider the following 250-residue polypeptide: tRNA (guanine-N(1)-)-methyltransferase (250 aa).

S-adenosyl-L-methionine contacts are provided by residues Gly113 and 133–138; that span reads IGDYVL.

It belongs to the RNA methyltransferase TrmD family. In terms of assembly, homodimer.

The protein localises to the cytoplasm. It catalyses the reaction guanosine(37) in tRNA + S-adenosyl-L-methionine = N(1)-methylguanosine(37) in tRNA + S-adenosyl-L-homocysteine + H(+). Specifically methylates guanosine-37 in various tRNAs. This is tRNA (guanine-N(1)-)-methyltransferase from Photorhabdus laumondii subsp. laumondii (strain DSM 15139 / CIP 105565 / TT01) (Photorhabdus luminescens subsp. laumondii).